A 300-amino-acid chain; its full sequence is Ribosomal protein L11 methyltransferase (300 aa).

Residues T148, G171, D193, and N235 each coordinate S-adenosyl-L-methionine.

Belongs to the methyltransferase superfamily. PrmA family.

Its subcellular location is the cytoplasm. It catalyses the reaction L-lysyl-[protein] + 3 S-adenosyl-L-methionine = N(6),N(6),N(6)-trimethyl-L-lysyl-[protein] + 3 S-adenosyl-L-homocysteine + 3 H(+). Methylates ribosomal protein L11. The polypeptide is Ribosomal protein L11 methyltransferase (Desulfotalea psychrophila (strain LSv54 / DSM 12343)).